The primary structure comprises 329 residues: Tyrosine recombinase XerC 1 (329 aa).

The Core-binding (CB) domain maps to 14–101; it reads APPHPQIGAY…AWRGWYQWLA (88 aa). In terms of domain architecture, Tyr recombinase spans 123–320; the sequence is RLPKALSVEQ…DFQHLAKIYD (198 aa). Residues Arg163, Lys198, His272, Arg275, and His298 contribute to the active site. Tyr307 functions as the O-(3'-phospho-DNA)-tyrosine intermediate in the catalytic mechanism.

The protein belongs to the 'phage' integrase family. XerC subfamily. In terms of assembly, forms a cyclic heterotetrameric complex composed of two molecules of XerC and two molecules of XerD.

The protein localises to the cytoplasm. Site-specific tyrosine recombinase, which acts by catalyzing the cutting and rejoining of the recombining DNA molecules. The XerC-XerD complex is essential to convert dimers of the bacterial chromosome into monomers to permit their segregation at cell division. It also contributes to the segregational stability of plasmids. This chain is Tyrosine recombinase XerC 1 (xerC1), found in Ralstonia nicotianae (strain ATCC BAA-1114 / GMI1000) (Ralstonia solanacearum).